The sequence spans 415 residues: Neuromedin-U receptor 2 (415 aa).

Residues Met1–Ser49 lie on the Extracellular side of the membrane. Residues Asn9 and Asn27 are each glycosylated (N-linked (GlcNAc...) asparagine). A helical membrane pass occupies residues Val50–Ile70. Topologically, residues Leu71–Tyr82 are cytoplasmic. Residues Tyr83 to Val103 traverse the membrane as a helical segment. Residues Tyr104 to Thr123 are Extracellular-facing. Cys119 and Cys204 form a disulfide bridge. Residues Ala124–Val146 form a helical membrane-spanning segment. Over Ala147–Arg165 the chain is Cytoplasmic. Residues Ile166 to Gly186 traverse the membrane as a helical segment. Residues Ile187–Asn214 lie on the Extracellular side of the membrane. N-linked (GlcNAc...) asparagine glycosylation is present at Asn194. The chain crosses the membrane as a helical span at residues Phe215–Leu235. Over Tyr236 to Ser265 the chain is Cytoplasmic. The chain crosses the membrane as a helical span at residues Val266–Ile286. The Extracellular segment spans residues Asp287–Leu301. A helical membrane pass occupies residues Ala302–Val322. The Cytoplasmic portion of the chain corresponds to Asn323–Thr415.

The protein belongs to the G-protein coupled receptor 1 family. As to expression, predominantly expressed in the CNS, particularly in the medulla oblongata, pontine reticular formation, spinal cord, and thalamus. High level in testis whereas lower levels are present in a variety of peripheral tissues including the gastrointestinal tract, genitourinary tract, liver, pancreas, adrenal gland, thyroid gland, lung, trachea, spleen and thymus.

Its subcellular location is the cell membrane. Functionally, receptor for the neuromedin-U and neuromedin-S neuropeptides. This chain is Neuromedin-U receptor 2 (NMUR2), found in Homo sapiens (Human).